Consider the following 147-residue polypeptide: Lysozyme C, intestinal isozyme (147 aa).

An N-terminal signal peptide occupies residues 1-18; sequence MKAVLILGLLLLSVTVQG. One can recognise a C-type lysozyme domain in the interval 19–147; sequence KKFEKCELAR…VSSYIRGCKL (129 aa). Intrachain disulfides connect cysteine 24-cysteine 145, cysteine 48-cysteine 133, cysteine 83-cysteine 99, and cysteine 95-cysteine 113. Active-site residues include glutamate 53 and aspartate 71.

Belongs to the glycosyl hydrolase 22 family.

The enzyme catalyses Hydrolysis of (1-&gt;4)-beta-linkages between N-acetylmuramic acid and N-acetyl-D-glucosamine residues in a peptidoglycan and between N-acetyl-D-glucosamine residues in chitodextrins.. Lysozymes have primarily a bacteriolytic function; those in tissues and body fluids are associated with the monocyte-macrophage system and enhance the activity of immunoagents. The polypeptide is Lysozyme C, intestinal isozyme (Bos taurus (Bovine)).